We begin with the raw amino-acid sequence, 318 residues long: NADH-ubiquinone oxidoreductase chain 1 (318 aa).

Transmembrane regions (helical) follow at residues 2-22 (FMIN…FLTL), 69-89 (FMFT…WVPL), 102-122 (MLFI…SGWA), 146-166 (LAII…STLT), 171-191 (HLWL…STLA), 231-251 (IIMM…NPLL), 253-273 (EAHT…FLWV), and 294-314 (LPLT…LACI).

It belongs to the complex I subunit 1 family. Core subunit of respiratory chain NADH dehydrogenase (Complex I) which is composed of 45 different subunits.

Its subcellular location is the mitochondrion inner membrane. It catalyses the reaction a ubiquinone + NADH + 5 H(+)(in) = a ubiquinol + NAD(+) + 4 H(+)(out). Core subunit of the mitochondrial membrane respiratory chain NADH dehydrogenase (Complex I) which catalyzes electron transfer from NADH through the respiratory chain, using ubiquinone as an electron acceptor. Essential for the catalytic activity and assembly of complex I. This Dugong dugon (Dugong) protein is NADH-ubiquinone oxidoreductase chain 1 (MT-ND1).